An 870-amino-acid polypeptide reads, in one-letter code: Protein csx2 (870 aa).

The disordered stretch occupies residues 212 to 251; it reads TSPEISDAPPLSGNVDPLPINSPPLTNPVARDIDQTEPED. The region spanning 510–614 is the PH domain; that stretch reads TSAKQGLLLA…WIEAIQYSIS (105 aa). Phosphoserine occurs at positions 625, 653, and 655. Positions 647–672 are disordered; sequence RVASVTSPSRHNSDSKEKKQTKSPSL. Residues 657–666 are compositionally biased toward basic and acidic residues; that stretch reads HNSDSKEKKQ. Residues 670–791 form the Arf-GAP domain; the sequence is PSLVKTLKEM…RFIKSSFSHD (122 aa). The C4-type zinc finger occupies 686–710; that stretch reads CADCNTTARVEWCAINFPVVLCIDC.

This Schizosaccharomyces pombe (strain 972 / ATCC 24843) (Fission yeast) protein is Protein csx2 (csx2).